The sequence spans 304 residues: Urease accessory protein UreD 2 (304 aa).

Belongs to the UreD family. As to quaternary structure, ureD, UreF and UreG form a complex that acts as a GTP-hydrolysis-dependent molecular chaperone, activating the urease apoprotein by helping to assemble the nickel containing metallocenter of UreC. The UreE protein probably delivers the nickel.

It localises to the cytoplasm. Its function is as follows. Required for maturation of urease via the functional incorporation of the urease nickel metallocenter. Disrupting the ure2 operon has no effect on urease activity or pathogen survival in BALB/c mice when administered orally. This is Urease accessory protein UreD 2 from Brucella abortus (strain 2308).